Consider the following 394-residue polypeptide: Phosphoglycerate kinase (394 aa).

Substrate contacts are provided by residues 21-23, R36, 59-62, R118, and R151; these read DFN and HLGR. S183 bears the Phosphoserine mark. Residue K201 coordinates ATP. A Phosphothreonine modification is found at T299. Residues E323 and 350–353 contribute to the ATP site; that span reads GGDS.

The protein belongs to the phosphoglycerate kinase family. As to quaternary structure, monomer.

Its subcellular location is the cytoplasm. It catalyses the reaction (2R)-3-phosphoglycerate + ATP = (2R)-3-phospho-glyceroyl phosphate + ADP. It participates in carbohydrate degradation; glycolysis; pyruvate from D-glyceraldehyde 3-phosphate: step 2/5. The chain is Phosphoglycerate kinase (pgk) from Bacillus subtilis (strain 168).